The chain runs to 999 residues: Hypoxia up-regulated protein 1 (999 aa).

Positions 1–32 (MAATVRRQRPRRLLCWALVAVLLADLLALSDT) are cleaved as a signal peptide. 3 N-linked (GlcNAc...) asparagine glycosylation sites follow: asparagine 155, asparagine 222, and asparagine 515. The interval 564–694 (VEDSPEEEST…KKQKPARKQK (131 aa)) is disordered. Serine 567 is modified (phosphoserine). Over residues 574-583 (LTKLGNTISS) the composition is skewed to polar residues. N-linked (GlcNAc...) asparagine glycosylation is present at asparagine 596. Composition is skewed to basic and acidic residues over residues 611–626 (GSKDEPAEQGELKEEA) and 641–668 (PKGDAAREGETPDEKESGDKSEAQKPNE). Residues asparagine 830, asparagine 862, and asparagine 869 are each glycosylated (N-linked (GlcNAc...) asparagine). An N6-acetyllysine modification is found at lysine 883. Positions 909 to 999 (AKFTKPRPRP…QKRPLKNDEL (91 aa)) are disordered. N-linked (GlcNAc...) asparagine glycans are attached at residues asparagine 922 and asparagine 931. A compositionally biased stretch (basic and acidic residues) spans 949–962 (EEAKAILEPDKEGL). The Prevents secretion from ER signature appears at 996 to 999 (NDEL).

It belongs to the heat shock protein 70 family. Part of a large chaperone multiprotein complex comprising DNAJB11, HSP90B1, HSPA5, HYOU, PDIA2, PDIA4, PDIA6, PPIB, SDF2L1, UGGT1 and very small amounts of ERP29, but not, or at very low levels, CALR nor CANX. Selectively expressed by cultured astrocytes but not endothelial cells, microglia or neurons.

Its subcellular location is the endoplasmic reticulum lumen. Has a pivotal role in cytoprotective cellular mechanisms triggered by oxygen deprivation. Promotes HSPA5/BiP-mediated ATP nucleotide exchange and thereby activates the unfolded protein response (UPR) pathway in the presence of endoplasmic reticulum stress. May play a role as a molecular chaperone and participate in protein folding. This is Hypoxia up-regulated protein 1 (Hyou1) from Rattus norvegicus (Rat).